A 1061-amino-acid chain; its full sequence is WNGPDELELEISSTDGVGHIRARNQLHKGFSWGPYKGNFTGSSSSPGPADLNISPSWDVDGDCWLKYVTLVSCEAEANAVLYRKGDLIWCKTSQIVEQDEVIQAFLKAEPQAIPNYTIKEEPGETSQCTSTLPEFQLLPQQAGMAAILATAVVNKDVFPCKDCGIWYRSERNLQAHLMYYCASRQSSTSPSMEEKAKDSYPNERICPFPQCKKSCPSTSSLEIHMRSHSGERPFVCLICLSAFTTKANCERHLKVHTDTLNGVCHGCGFISTTRDILYSHLVTNHMICQPGSKVDVYPVVKAVPAVKSSNPVVSQIASSSLLKCGLCGFLAEDFQVFNHALLHTTNPVPSATHSVKSPPENINEKQNPESQENGNAKSPISSSSSASSRSEETPLKLYIKQEPEGQLSISEAGSTTCEAKDGVALVQSPAIKVKTEMSSPTPGSSPVPNETGAATGGGTVIIPHYVFGHEATAAIVPQASEILAKMSELVHSRLKQGQAVTPAGFSGSAVPKGATCFECEITFNNINNYYVHKRLYCSGRHVSDENSSSARKVKALPARTALASGFSSTEQEASPPQEDAGEESSAPVVAVKLEENSGMDCEGAGSGHVSEGSQSPSSLDDPEEDPNRTVCGACNIRFSRHETYVVHKRYYCASRHDPPLRRREVNKPGPPYTTQPTPRTRKRRKLYEIHGVAPTESTPPSPHTLGRVEAMALMPGLIPAPVMPSPSSSPDAVDGPIDLSKKPRLVAEAPVPSAAATVAPLADYHECTACRISFNSLESYLAHKKFSCPTAPLQQKTIQQLQKVKSPSSATGKLVDDTVKVKVESKAALSPGSVSDTIQPLALPFSTISDPKQLQQYSSVTEASLSATTTCPYCPHNVIIRGDLLEHFRSVHGLILAKPTAGHRLQTTIMEVLVPARGQTSSASENSLPSPPVSSASPLQLPGLRRENSNYKDTTSSSSSVNGSPILTSTPRPLLPTSPAPPSNSLPLAESRREDGLPRVPSQVLLPGDKAMQPPKPSLISPVPNGNHRYCRLCNIKFSSLSTFIAHKKYYCSSHAAEHVK.

A CCHC FOG-type 1 zinc finger spans residues 152-185 (VVNKDVFPCKDCGIWYRSERNLQAHLMYYCASRQ). Zn(2+) is bound by residues Cys-160, Cys-163, His-176, and Cys-181. 3 C2H2-type zinc fingers span residues 204 to 228 (RICP…MRSH), 234 to 256 (FVCL…LKVH), and 262 to 285 (GVCH…VTNH). Disordered stretches follow at residues 349–393 (PSAT…SEET) and 435–455 (TEMS…GAAT). Low complexity predominate over residues 378–388 (SPISSSSSASS). Positions 436–448 (EMSSPTPGSSPVP) are enriched in polar residues. The CCHC FOG-type 2 zinc-finger motif lies at 508–541 (SAVPKGATCFECEITFNNINNYYVHKRLYCSGRH). Zn(2+)-binding residues include Cys-516, Cys-519, His-532, and Cys-537. 2 disordered regions span residues 561–586 (ALAS…ESSA) and 599–630 (MDCE…NRTV). Positions 565–574 (GFSSTEQEAS) are enriched in polar residues. The segment at 623–656 (EEDPNRTVCGACNIRFSRHETYVVHKRYYCASRH) adopts a CCHC FOG-type 3 zinc-finger fold. 4 residues coordinate Zn(2+): Cys-631, Cys-634, His-647, and Cys-652. The disordered stretch occupies residues 661 to 681 (RRREVNKPGPPYTTQPTPRTR). An interaction with CTBP region spans residues 736–742 (PIDLSKK). Residues 759 to 792 (APLADYHECTACRISFNSLESYLAHKKFSCPTAP) form a CCHC FOG-type 4 zinc finger. 4 residues coordinate Zn(2+): Cys-767, Cys-770, His-783, and Cys-788. A C2H2-type 4 zinc finger spans residues 869-892 (TTCPYCPHNVIIRGDLLEHFRSVH). Residues 917-1021 (RGQTSSASEN…MQPPKPSLIS (105 aa)) are disordered. Composition is skewed to low complexity over residues 933 to 942 (VSSASPLQLP) and 954 to 972 (TTSS…STPR). Residues 973-984 (PLLPTSPAPPSN) show a composition bias toward pro residues. The segment at 1023 to 1056 (VPNGNHRYCRLCNIKFSSLSTFIAHKKYYCSSHA) adopts a CCHC FOG-type 5 zinc-finger fold. Residues Cys-1031, Cys-1034, His-1047, and Cys-1052 each contribute to the Zn(2+) site.

The protein belongs to the FOG (Friend of GATA) family. In terms of assembly, interacts with corepressor CTBP. Interacts with the N-terminal zinc-finger of GATA1 and probably GATA2. Predominantly expressed in heart and brain. Also expressed in ventral blood island and adult spleen.

The protein resides in the nucleus. In terms of biological role, transcription regulator that plays an central role in red blood cell differentiation. Essential cofactor that acts via the formation of a heterodimer with transcription factors of the GATA family GATA1 and GATA2. Such heterodimer can both activate or repress transcriptional activity, depending on the cell and promoter context. Acts as a repressor of red blood cells, probably by modulating activity of GATA1. The sequence is that of Zinc finger protein ZFPM1 (zfpm1) from Xenopus laevis (African clawed frog).